The following is a 158-amino-acid chain: 6,7-dimethyl-8-ribityllumazine synthase (158 aa).

5-amino-6-(D-ribitylamino)uracil-binding positions include Phe-22, 57-59 (AYE), and 84-86 (TVI). 89-90 (GT) is a binding site for (2S)-2-hydroxy-3-oxobutyl phosphate. His-92 acts as the Proton donor in catalysis. Residue Phe-117 participates in 5-amino-6-(D-ribitylamino)uracil binding. Arg-131 lines the (2S)-2-hydroxy-3-oxobutyl phosphate pocket.

This sequence belongs to the DMRL synthase family. In terms of assembly, forms an icosahedral capsid composed of 60 subunits, arranged as a dodecamer of pentamers.

The catalysed reaction is (2S)-2-hydroxy-3-oxobutyl phosphate + 5-amino-6-(D-ribitylamino)uracil = 6,7-dimethyl-8-(1-D-ribityl)lumazine + phosphate + 2 H2O + H(+). The protein operates within cofactor biosynthesis; riboflavin biosynthesis; riboflavin from 2-hydroxy-3-oxobutyl phosphate and 5-amino-6-(D-ribitylamino)uracil: step 1/2. In terms of biological role, catalyzes the formation of 6,7-dimethyl-8-ribityllumazine by condensation of 5-amino-6-(D-ribitylamino)uracil with 3,4-dihydroxy-2-butanone 4-phosphate. This is the penultimate step in the biosynthesis of riboflavin. In Pectobacterium atrosepticum (strain SCRI 1043 / ATCC BAA-672) (Erwinia carotovora subsp. atroseptica), this protein is 6,7-dimethyl-8-ribityllumazine synthase.